The primary structure comprises 378 residues: Nucleosome assembly protein 1;1 (378 aa).

Residues 33–87 (VNALKDKLQSLAGQHTDVLEALSPNVRKRVEYLREIQGQHDEIELKFFEERAALE) are a coiled coil. The Nuclear export signal motif lies at 54–69 (LSPNVRKRVEYLREIQ). The short motif at 230 to 235 (KKKPKK) is the Nuclear localization signal element. A disordered region spans residues 306–378 (AVQAEDFDDM…ADQPADCKQQ (73 aa)). Positions 308-344 (QAEDFDDMEDDEEDDEDDDEDEEEEEEDEDEDEDDEE) are enriched in acidic residues. The Nuclear localization signal motif lies at 348-352 (KPKKK). Over residues 356–378 (KPKLPSKGGAQGGADQPADCKQQ) the composition is skewed to low complexity. Cysteine 375 carries the post-translational modification Cysteine methyl ester. Cysteine 375 is lipidated: S-farnesyl cysteine. Residues 376 to 378 (KQQ) constitute a propeptide, removed in mature form.

Belongs to the nucleosome assembly protein (NAP) family.

Its subcellular location is the nucleus. It localises to the cytoplasm. Functionally, may modulate chromatin structure by regulation of nucleosome assembly/disassembly. This chain is Nucleosome assembly protein 1;1 (NAP1;1), found in Oryza sativa subsp. japonica (Rice).